The chain runs to 556 residues: Endonuclease/exonuclease/phosphatase family domain-containing protein 1 (556 aa).

Residues 39–68 form the HhH domain; sequence ERLNINTATEEELMTLPGVTRQVAQNIVEY.

The polypeptide is Endonuclease/exonuclease/phosphatase family domain-containing protein 1 (eepd1) (Xenopus laevis (African clawed frog)).